A 102-amino-acid chain; its full sequence is Small ribosomal subunit protein uS10 (102 aa).

The protein belongs to the universal ribosomal protein uS10 family. As to quaternary structure, part of the 30S ribosomal subunit.

Functionally, involved in the binding of tRNA to the ribosomes. The sequence is that of Small ribosomal subunit protein uS10 from Sulfolobus acidocaldarius (strain ATCC 33909 / DSM 639 / JCM 8929 / NBRC 15157 / NCIMB 11770).